Here is a 704-residue protein sequence, read N- to C-terminus: Translin-associated factor X-interacting protein 1 (704 aa).

A disordered region spans residues 1–37 (MANLQERKSFSKPRISIQASGGTPEAKGIEKRKLSQK). 2 coiled-coil regions span residues 190 to 230 (EISV…AEEY) and 304 to 342 (RRDL…LQLH).

As to quaternary structure, interacts with TSNAX. In terms of tissue distribution, specifically expressed in testes. Predominantly detected in the post-meiotic stages of germ cells.

It localises to the cytoplasm. The protein localises to the perinuclear region. Its function is as follows. Possible role in spermatogenesis. The chain is Translin-associated factor X-interacting protein 1 from Mus musculus (Mouse).